We begin with the raw amino-acid sequence, 329 residues long: Sex comb on midleg-like protein 1 (329 aa).

Phosphoserine occurs at positions 138 and 238. The 68-residue stretch at 258–325 (WSVEAVVLFL…YYIDRLKQGK (68 aa)) folds into the SAM domain.

The protein belongs to the SCM family.

It localises to the nucleus. Functionally, putative Polycomb group (PcG) protein. PcG proteins act by forming multiprotein complexes, which are required to maintain the transcriptionally repressive state of homeotic genes throughout development. May be involved in spermatogenesis during sexual maturation. The polypeptide is Sex comb on midleg-like protein 1 (SCML1) (Hoolock hoolock (Western hoolock gibbon)).